The following is a 76-amino-acid chain: Exodeoxyribonuclease 7 small subunit (76 aa).

The protein belongs to the XseB family. As to quaternary structure, heterooligomer composed of large and small subunits.

Its subcellular location is the cytoplasm. It carries out the reaction Exonucleolytic cleavage in either 5'- to 3'- or 3'- to 5'-direction to yield nucleoside 5'-phosphates.. Its function is as follows. Bidirectionally degrades single-stranded DNA into large acid-insoluble oligonucleotides, which are then degraded further into small acid-soluble oligonucleotides. This chain is Exodeoxyribonuclease 7 small subunit, found in Staphylococcus aureus (strain MRSA252).